Consider the following 215-residue polypeptide: Probable transaldolase (215 aa).

The Schiff-base intermediate with substrate role is filled by Lys83.

The protein belongs to the transaldolase family. Type 3B subfamily.

The protein localises to the cytoplasm. It carries out the reaction D-sedoheptulose 7-phosphate + D-glyceraldehyde 3-phosphate = D-erythrose 4-phosphate + beta-D-fructose 6-phosphate. The protein operates within carbohydrate degradation; pentose phosphate pathway; D-glyceraldehyde 3-phosphate and beta-D-fructose 6-phosphate from D-ribose 5-phosphate and D-xylulose 5-phosphate (non-oxidative stage): step 2/3. Transaldolase is important for the balance of metabolites in the pentose-phosphate pathway. In Clostridium perfringens (strain 13 / Type A), this protein is Probable transaldolase.